The sequence spans 1060 residues: Carbamoyl phosphate synthase large chain (1060 aa).

Residues 1–401 are carboxyphosphate synthetic domain; it reads MPKRTDIKKI…SLLKAVRSLE (401 aa). Positions 129, 169, 175, 176, 208, 210, 215, 241, 242, 243, 284, and 298 each coordinate ATP. The 195-residue stretch at 133-327 folds into the ATP-grasp 1 domain; that stretch reads KQLMEELEQP…IAKLAAKIAV (195 aa). Mg(2+) is bound by residues Q284, E298, and N300. Mn(2+) contacts are provided by Q284, E298, and N300. The oligomerization domain stretch occupies residues 402–546; the sequence is IGAYHNELAE…YSTYEVENES (145 aa). Positions 547–929 are carbamoyl phosphate synthetic domain; sequence NVSKKPSVLV…ALYKAFEASG (383 aa). The ATP-grasp 2 domain occupies 671 to 861; it reads EQALQELAIP…MAQVATKAIL (191 aa). R707, S746, L748, E752, G777, V778, H779, S780, Q820, and E832 together coordinate ATP. Q820, E832, and N834 together coordinate Mg(2+). 3 residues coordinate Mn(2+): Q820, E832, and N834. Residues 930 to 1060 form the MGS-like domain; sequence LHLPSYGAVL…ESRAFTTEAI (131 aa). Residues 930-1060 are allosteric domain; it reads LHLPSYGAVL…ESRAFTTEAI (131 aa).

This sequence belongs to the CarB family. As to quaternary structure, composed of two chains; the small (or glutamine) chain promotes the hydrolysis of glutamine to ammonia, which is used by the large (or ammonia) chain to synthesize carbamoyl phosphate. Tetramer of heterodimers (alpha,beta)4. Mg(2+) is required as a cofactor. Requires Mn(2+) as cofactor.

It catalyses the reaction hydrogencarbonate + L-glutamine + 2 ATP + H2O = carbamoyl phosphate + L-glutamate + 2 ADP + phosphate + 2 H(+). The catalysed reaction is hydrogencarbonate + NH4(+) + 2 ATP = carbamoyl phosphate + 2 ADP + phosphate + 2 H(+). Its pathway is amino-acid biosynthesis; L-arginine biosynthesis; carbamoyl phosphate from bicarbonate: step 1/1. It participates in pyrimidine metabolism; UMP biosynthesis via de novo pathway; (S)-dihydroorotate from bicarbonate: step 1/3. Functionally, large subunit of the glutamine-dependent carbamoyl phosphate synthetase (CPSase). CPSase catalyzes the formation of carbamoyl phosphate from the ammonia moiety of glutamine, carbonate, and phosphate donated by ATP, constituting the first step of 2 biosynthetic pathways, one leading to arginine and/or urea and the other to pyrimidine nucleotides. The large subunit (synthetase) binds the substrates ammonia (free or transferred from glutamine from the small subunit), hydrogencarbonate and ATP and carries out an ATP-coupled ligase reaction, activating hydrogencarbonate by forming carboxy phosphate which reacts with ammonia to form carbamoyl phosphate. The chain is Carbamoyl phosphate synthase large chain from Enterococcus faecalis (strain ATCC 700802 / V583).